The chain runs to 75 residues: Small ribosomal subunit protein bS18 (75 aa).

The protein belongs to the bacterial ribosomal protein bS18 family. Part of the 30S ribosomal subunit. Forms a tight heterodimer with protein bS6.

Binds as a heterodimer with protein bS6 to the central domain of the 16S rRNA, where it helps stabilize the platform of the 30S subunit. The polypeptide is Small ribosomal subunit protein bS18 (Sodalis glossinidius (strain morsitans)).